Here is a 519-residue protein sequence, read N- to C-terminus: Circadian clock oscillator protein KaiC (519 aa).

The KaiC 1 domain maps to 1–247; it reads MTSAEMTSPN…TITDHGINIF (247 aa). Residues Gly49, Thr50, Gly51, Lys52, Thr53, and Leu54 each contribute to the ATP site. Residue Thr53 participates in Mg(2+) binding. Catalysis depends on Glu77, which acts as the Proton acceptor in CI (KaiC 1). Ser89 provides a ligand contact to ATP. Residues 115–122 form a B-loop, required to bind KaiB and SasA region; the sequence is QEVVGGFD. The ATP site is built by Lys224, Leu225, Arg226, Thr228, His230, Thr240, and Asp241. The segment at 248–260 is linker; that stretch reads PLGAMRLTQRSSN. In terms of domain architecture, KaiC 2 spans 261–519; the sequence is VRVSSGVVRL…RGVQEKGPES (259 aa). 7 residues coordinate ATP: Thr290, Gly291, Thr292, Gly293, Lys294, Thr295, and Leu296. Residue Thr295 participates in Mg(2+) binding. A Mg(2+)-binding site is contributed by Glu318. Glu318 (proton acceptor in CII (KaiC 2)) is an active-site residue. Trp331 is a binding site for ATP. Residue Ser431 is modified to Phosphoserine; by autocatalysis. Thr432 carries the phosphothreonine; by autocatalysis modification. ATP contacts are provided by Arg451, Lys457, Met458, Arg459, Ser461, His463, and Lys465. The interval 488–497 is A-loop, interacts with KaiA; that stretch reads RIISGSPTRI.

It belongs to the KaiC family. In terms of assembly, homohexamer resembling 2 stacked donuts with a central pore nearly blocked on one side; hexamerization is dependent on ATP-binding. Binds 12 ATP; 6 between each subunit in both layers. KaiB only binds to phospho-Ser-431 KaiC (not doubly phosphorylated KaiC). Complex formation between KaiB and KaiC is regulated by the phosphorylation state of KaiC and by an ATP hydrolysis-driven conformation change in the CI ring of KaiC; complex formation is slow. Slow complex formation is crucial for the timing of the circadian period. KaiB switches to a thioredoxin-like form called KaiB(fs) when bound to KaiC. The KaiABC complex composition changes during the circadian cycle to control KaiC phosphorylation. Complexes KaiC(6), KaiA(2-4):KaiC(6), KaiB(6):KaiC(6) and KaiC(6):KaiB(6):KaiA(12) are among the most important forms, many form cooperatively. Interacts directly with KaiB and SasA. The CI domain binds to KaiB and SasA; as they have a similar fold they compete for the same site on CI. CikA interacts with this protein in the clock complex. Binds to the C-terminus of KaiA via a coiled-coil structure. Forms KaiC(6):KaiB(1) and KaiC(6):KaiB(6) complexes. It depends on Mg(2+) as a cofactor. Post-translationally, has a 4 step phosphorylation cycle; the autokinase acts first on Thr-432, then Ser-431. When Ser-431 is modified KaiC switches to an autophosphatase mode, acting first on phospho-Thr-432 then phospho-Ser-431. Phosphorylated and dephosphorylated on serine/threonine residues by autocatalysis. Unphosphorylated, mono- and di-phosphorylated forms exist. The phosphorylated form correlates with clock speed. The presence of KaiA increases phosphorylation and stabilizes these forms. Phosphorylated on serine and threonine residues by autocatalysis. Has a 4 step phosphorylation cycle; the autokinase acts first on Thr-432, then Ser-431. When Ser-431 is modified KaiC switches to an autophosphatase mode, acting first on phospho-Thr-432 then phospho-Ser-431.

It carries out the reaction L-seryl-[protein] + ATP = O-phospho-L-seryl-[protein] + ADP + H(+). The enzyme catalyses L-threonyl-[protein] + ATP = O-phospho-L-threonyl-[protein] + ADP + H(+). The catalysed reaction is ATP + H2O = ADP + phosphate + H(+). Its activity is regulated as follows. Interaction with KaiA stimulates autophosphorylation, KaiC interaction with KaiB sequesters KaiA, preventing it stimulating the KaiC kinase, leading to autodephosphorylation. A KaiA dimer is sufficient to enhance KaiC phosphorylation. Interaction of KaiA with the A-loop stimulates autokinase activity. Its function is as follows. The KaiABC oscillator complex constitutes the main circadian regulator in cyanobacteria. Complex composition changes during the circadian cycle to control KaiC phosphorylation; KaiA stimulates KaiC autophosphorylation, while KaiB sequesters KaiA, leading to KaiC autodephosphorylation. The Kai complex controls chromosome condensation, leading to a transcription accessible chromosome during the first half of the circadian cycle and a compact, less transcription-accessible chromosome during the latter half. Clock output pathways impact the RpaA transcriptional regulator. Circadian oscillations can be generated in vitro by incubating KaiA, KaiB and KaiC with 1 mM ATP. The cycle is self-sustainable for at least 3 cycles and resistant to temperature changes. Mutations in KaiC alone prolong or reduce the circadian rhythm. A very robust clock is reconstituted with KaiA, KaiB, KaiC, SasA, CikA and RpaA; output is measured by transcription from an appropriate reporter. The level of KaiC phosphorylation and KaiC ATPase activity represent the key features of the biochemical oscillator. KaiA homodimer binding to the KaiC CII domain stimulates KaiC's ATPase activity and forms KaiA(2-4):KaiC(6) complexes, which stimulate KaiC autophosphorylation first on Thr-432 then Ser-431. Phospho-Ser-431-KaiC accumulation triggers binding of KaiB to CI to form the KaiB(6):KaiC(6) complex, leading to changes in the output regulators CikA and SasA. KaiB(6):KaiC(6) formation exposes a site for KaiA binding that sequesters KaiA from the CII domain, making the KaiC(6):KaiB(6):KaiA(12) complex that results in KaiC autodephosphorylation. Complete dephosphorylation of KaiC leads to dissociation of KaiA(2):KaiB(1), completing 1 cycle of the Kai oscillator. In terms of biological role, has a weak, temperature-independent ATPase activity (about 15 molecules of ATP per day); the addition of KaiA and KaiB increases activity slightly and makes the activity oscillate with a circadian period in vitro for over 60 hours. ATPase activity defines the circadian period. The phosphorylation state of KaiC modulates its ATPase activity and effects KaiB binding. Functionally, there are several clock output pathways; SasA/RpaA, CikA/RpaA and LabA. KaiC enhances the autophosphorylation activity of SasA, which then transfers its phosphate group to RpaA to activate it. Phosphotransfer is maximal when KaiC phosphorylation is active during the circadian cycle. KaiB and KaiC together enhance the phosphatase activity of CikA on phospho-RpaA. Its function is as follows. KaiC is important for metabolic partitioning during the dark to light shift, modulating the balance between the Calvin cycle and oxidative pentose phosphate pathway under natural growth conditions. This Synechococcus elongatus (strain ATCC 33912 / PCC 7942 / FACHB-805) (Anacystis nidulans R2) protein is Circadian clock oscillator protein KaiC.